The sequence spans 551 residues: Tetrachloroethene reductive dehalogenase (551 aa).

Positions 1-39 (MGEINRRNFLKVSILGAAAAAVASASAVKGMVSPLVADA) form a signal peptide, tat-type signal. In terms of domain architecture, 4Fe-4S ferredoxin-type 1 spans 411–440 (PRKFGVREFCRLCKKCADACPAQAISHEKD). C420, C423, C426, C430, C467, C478, C481, and C485 together coordinate [4Fe-4S] cluster. The region spanning 478 to 496 (CSNCVAVCSWNKVETWNHD) is the 4Fe-4S ferredoxin-type 2 domain.

It belongs to the PceA family. [4Fe-4S] cluster is required as a cofactor. It depends on corrinoid as a cofactor. Predicted to be exported by the Tat system. The position of the signal peptide cleavage has not been experimentally proven.

The protein localises to the cell membrane. It carries out the reaction trichloroethene + chloride + A + H(+) = tetrachloroethene + AH2. The catalysed reaction is trichloroethene + AH2 = (Z)-1,2-dichloroethene + chloride + A + H(+). Catalyzes the reductive dechlorination of tetrachloroethene (PCE) to trichloroethene (TCE) and of trichloroethene to cis-1,2-dichloroethene (DCE). This chain is Tetrachloroethene reductive dehalogenase, found in Desulfitobacterium hafniense (Desulfitobacterium frappieri).